A 141-amino-acid polypeptide reads, in one-letter code: ATP synthase epsilon chain (141 aa).

Belongs to the ATPase epsilon chain family. In terms of assembly, F-type ATPases have 2 components, CF(1) - the catalytic core - and CF(0) - the membrane proton channel. CF(1) has five subunits: alpha(3), beta(3), gamma(1), delta(1), epsilon(1). CF(0) has three main subunits: a, b and c.

It localises to the cell inner membrane. Functionally, produces ATP from ADP in the presence of a proton gradient across the membrane. This Dechloromonas aromatica (strain RCB) protein is ATP synthase epsilon chain.